Reading from the N-terminus, the 234-residue chain is Peptidyl-prolyl cis-trans isomerase, rhodopsin-specific isozyme (234 aa).

A signal peptide spans 1 to 19 (MNILKILILLELIYTCVSG). The 159-residue stretch at 29–187 (YMDVKHQKKP…DPVIIVNCGE (159 aa)) folds into the PPIase cyclophilin-type domain. The N-linked (GlcNAc...) asparagine glycan is linked to asparagine 67. The helical transmembrane segment at 202-222 (ILGWIKAAGLPFCSSFIVLMI) threads the bilayer.

It belongs to the cyclophilin-type PPIase family. Expressed specifically in photoreceptor cells.

It localises to the membrane. It catalyses the reaction [protein]-peptidylproline (omega=180) = [protein]-peptidylproline (omega=0). PPIases accelerate the folding of proteins. It catalyzes the cis-trans isomerization of proline imidic peptide bonds in oligopeptides. Acts on the folding of rhodopsin RH1 and RH2 (but not RH3) and is required for visual transduction. The sequence is that of Peptidyl-prolyl cis-trans isomerase, rhodopsin-specific isozyme (NINAA) from Calliphora vicina (Blue blowfly).